The chain runs to 487 residues: Serine/threonine-protein kinase 4 (487 aa).

Met-1 carries the N-acetylmethionine modification. Residue Thr-3 is modified to Phosphothreonine. Residues 30–281 form the Protein kinase domain; it reads FDVLEKLGEG…ATQLLQHPFV (252 aa). Residues 36–44 and Lys-59 each bind ATP; that span reads LGEGSYGSV. Asp-149 functions as the Proton acceptor in the catalytic mechanism. Position 183 is a phosphothreonine; by autocatalysis (Thr-183). Position 265 is a phosphoserine (Ser-265). A coiled-coil region spans residues 290–310; the sequence is LRDLINEAMDVKLKRQESQQR. The span at 303–312 shows a compositional bias: basic and acidic residues; the sequence is KRQESQQREV. Residues 303–332 form a disordered region; sequence KRQESQQREVDQDDEENSEEDEMDSGTMVR. Residues 313 to 326 show a composition bias toward acidic residues; it reads DQDDEENSEEDEMD. The residue at position 320 (Ser-320) is a Phosphoserine. Residues Thr-340 and Thr-367 each carry the phosphothreonine modification. Thr-387 is subject to Phosphothreonine; by PKB/AKT1. Phosphoserine occurs at positions 410 and 414. A Phosphotyrosine modification is found at Tyr-433. Residues 433–480 form the SARAH domain; it reads YEFLKSWTVEDLQKRLLALDPMMEQEIEEIRQKYQSKRQPILDAIEAK.

It belongs to the protein kinase superfamily. STE Ser/Thr protein kinase family. STE20 subfamily. As to quaternary structure, homodimer; mediated via the coiled-coil region. Interacts with NORE1, which inhibits autoactivation. Interacts with and stabilizes SAV1. Interacts with RASSF1. Interacts with FOXO3. Interacts with RASSF2 (via SARAH domain). Interacts with AR, PKB/AKT1, TNNI3 and SIRT1. Interacts with DLG5 (via PDZ domain 3). Interacts with MARK3 and SCRIB in the presence of DLG5. Requires Mg(2+) as cofactor. Autophosphorylated on serine and threonine residues. Phosphorylation at Thr-387 by PKB/AKT1, leads to inhibition of its: kinase activity, nuclear translocation and autophosphorylation at Thr-183. It also diminishes its cleavage by caspases and its ability to phosphorylate FOXO3. In terms of processing, proteolytically cleaved by caspase-3 during apoptosis at Asp-326 and Asp-349 resulting in a 37 kDa or a 39 kDa subunit respectively. The 39 kDa subunit is further cleaved into the 37 kDa form. Proteolytic cleavage results in kinase activation and nuclear translocation of the truncated form (MST1/N). It is less likely that cleavage at Asp-349 is a prerequisite for activation as this site is not conserved in the murine ortholog.

Its subcellular location is the cytoplasm. The protein resides in the nucleus. The enzyme catalyses L-seryl-[protein] + ATP = O-phospho-L-seryl-[protein] + ADP + H(+). It carries out the reaction L-threonyl-[protein] + ATP = O-phospho-L-threonyl-[protein] + ADP + H(+). Its activity is regulated as follows. Inhibited by the C-terminal non-catalytic region. Activated by caspase-cleavage. Full activation also requires homodimerization and autophosphorylation of Thr-183. Activated by RASSF1 which acts by preventing its dephosphorylation. Functionally, stress-activated, pro-apoptotic kinase which, following caspase-cleavage, enters the nucleus and induces chromatin condensation followed by internucleosomal DNA fragmentation. Key component of the Hippo signaling pathway which plays a pivotal role in organ size control and tumor suppression by restricting proliferation and promoting apoptosis. The core of this pathway is composed of a kinase cascade wherein STK3/MST2 and STK4/MST1, in complex with its regulatory protein SAV1, phosphorylates and activates LATS1/2 in complex with its regulatory protein MOB1, which in turn phosphorylates and inactivates YAP1 oncoprotein and WWTR1/TAZ. Phosphorylation of YAP1 by LATS2 inhibits its translocation into the nucleus to regulate cellular genes important for cell proliferation, cell death, and cell migration. STK3/MST2 and STK4/MST1 are required to repress proliferation of mature hepatocytes, to prevent activation of facultative adult liver stem cells (oval cells), and to inhibit tumor formation. Phosphorylates 'Ser-14' of histone H2B (H2BS14ph) during apoptosis. Phosphorylates FOXO3 upon oxidative stress, which results in its nuclear translocation and cell death initiation. Phosphorylates MOBKL1A, MOBKL1B and RASSF2. Phosphorylates TNNI3 (cardiac Tn-I) and alters its binding affinity to TNNC1 (cardiac Tn-C) and TNNT2 (cardiac Tn-T). Phosphorylates FOXO1 on 'Ser-212' and regulates its activation and stimulates transcription of PMAIP1 in a FOXO1-dependent manner. Phosphorylates SIRT1 and inhibits SIRT1-mediated p53/TP53 deacetylation, thereby promoting p53/TP53 dependent transcription and apoptosis upon DNA damage. Acts as an inhibitor of PKB/AKT1. Phosphorylates AR on 'Ser-650' and suppresses its activity by intersecting with PKB/AKT1 signaling and antagonizing formation of AR-chromatin complexes. This chain is Serine/threonine-protein kinase 4 (STK4), found in Macaca mulatta (Rhesus macaque).